The sequence spans 141 residues: MAKKIAAQFRLLLPAGKATPAPPVGPALGQRGVNIMEFIKRFNAATASMGDVLVPVDVTVFADKSFTFEVRTPPASFLLKKAAKVEKGSGEPNKVTVGKVTRAQVEEIAKQKMKDLNTEDLEAAVRIIEGTARSMGIQVVD.

This sequence belongs to the universal ribosomal protein uL11 family. In terms of assembly, part of the ribosomal stalk of the 50S ribosomal subunit. Interacts with L10 and the large rRNA to form the base of the stalk. L10 forms an elongated spine to which L12 dimers bind in a sequential fashion forming a multimeric L10(L12)X complex. Post-translationally, one or more lysine residues are methylated.

Functionally, forms part of the ribosomal stalk which helps the ribosome interact with GTP-bound translation factors. The protein is Large ribosomal subunit protein uL11 of Coprothermobacter proteolyticus (strain ATCC 35245 / DSM 5265 / OCM 4 / BT).